The primary structure comprises 257 residues: NAD-capped RNA hydrolase NudC (257 aa).

The substrate site is built by Lys25 and Arg69. Cys98 and Cys101 together coordinate Zn(2+). Glu111 is a binding site for substrate. Positions 116 and 119 each coordinate Zn(2+). Tyr124 is a binding site for substrate. The region spanning 125–248 (PQIAPCIIVA…TVARRLIEDT (124 aa)) is the Nudix hydrolase domain. Ala158, Glu174, and Glu178 together coordinate a divalent metal cation. Positions 159–180 (GFVEVGETLEQAVAREVMEESG) match the Nudix box motif. Substrate is bound at residue 192-199 (QPWPFPQS). Position 219 (Glu219) interacts with a divalent metal cation. Ala241 contacts substrate.

Belongs to the Nudix hydrolase family. NudC subfamily. As to quaternary structure, homodimer. Mg(2+) serves as cofactor. Mn(2+) is required as a cofactor. Requires Zn(2+) as cofactor.

It carries out the reaction a 5'-end NAD(+)-phospho-ribonucleoside in mRNA + H2O = a 5'-end phospho-adenosine-phospho-ribonucleoside in mRNA + beta-nicotinamide D-ribonucleotide + 2 H(+). The enzyme catalyses NAD(+) + H2O = beta-nicotinamide D-ribonucleotide + AMP + 2 H(+). It catalyses the reaction NADH + H2O = reduced beta-nicotinamide D-ribonucleotide + AMP + 2 H(+). In terms of biological role, mRNA decapping enzyme that specifically removes the nicotinamide adenine dinucleotide (NAD) cap from a subset of mRNAs by hydrolyzing the diphosphate linkage to produce nicotinamide mononucleotide (NMN) and 5' monophosphate mRNA. The NAD-cap is present at the 5'-end of some mRNAs and stabilizes RNA against 5'-processing. Has preference for mRNAs with a 5'-end purine. Catalyzes the hydrolysis of a broad range of dinucleotide pyrophosphates. This Escherichia fergusonii (strain ATCC 35469 / DSM 13698 / CCUG 18766 / IAM 14443 / JCM 21226 / LMG 7866 / NBRC 102419 / NCTC 12128 / CDC 0568-73) protein is NAD-capped RNA hydrolase NudC.